The following is a 367-amino-acid chain: E3 ubiquitin-protein ligase RGLG3 (367 aa).

Residues 37–257 (NLILGIDFTK…KEAAFALAAL (221 aa)) enclose the VWFA domain. The RING-type zinc-finger motif lies at 323 to 356 (CPICLTNPKDMAFSCGHTTCKECGVVITTCPLCR).

As to quaternary structure, interacts with UBC30, GRXS17 and GLB3. Binds to and coactivates GAF1/IDD2 and ENY/IDD1. Widely expressed.

Its subcellular location is the cytoplasm. The protein localises to the nucleus. It carries out the reaction S-ubiquitinyl-[E2 ubiquitin-conjugating enzyme]-L-cysteine + [acceptor protein]-L-lysine = [E2 ubiquitin-conjugating enzyme]-L-cysteine + N(6)-ubiquitinyl-[acceptor protein]-L-lysine.. Its function is as follows. Possesses E3 ubiquitin-protein ligase in vitro. Acts as upstream modulator of jasmonate (JA) signaling in response to various stimuli, such as JA-inhibited root growth, JA-inductive gene expression, coronatine-mediated pathogen susceptibility, wound-stimulated expression of JA-responsive genes and wound-induced JA biosynthesis. Controls fumonisin B1 (FB1)-triggered programmed cell death (PCD) by modulating the JA signaling pathway. May mediate salicylic acid (SA) suppression of JA signaling in FB1-induced responses. May mediate the formation of 'Lys-48'-linked multiubiquitin chains. Mediates the polyubiquitination and subsequent proteasomal degradation of the target protein GRXS17. The chain is E3 ubiquitin-protein ligase RGLG3 from Arabidopsis thaliana (Mouse-ear cress).